The sequence spans 421 residues: Proton/sodium-glutamate symport protein (421 aa).

At 1–3 (MRK) the chain is on the cytoplasmic side. A helical membrane pass occupies residues 4–24 (IGLAWQIFIGLILGIIVGAIF). Residues 25–43 (YGNPKVAAYLQPIGDIFLR) are Extracellular-facing. Residues 44–64 (LIKMIVIPIVISSLVVGVASV) form a helical membrane-spanning segment. Residues 65 to 77 (GDLKKLGKLGGKT) are Cytoplasmic-facing. The chain crosses the membrane as a helical span at residues 78–98 (IIYFEIITTIAIVVGLLAANI). Residues 99 to 148 (FQPGAGVNMKSLEKTDIQSYVDTTNEVQHHSMVETFVNIVPKNIFESLST) lie on the Extracellular side of the membrane. A helical membrane pass occupies residues 149-169 (GDMLPIIFFSVMFGLGVAAIG). At 170–198 (EKGKPVLQFFQGTAEAMFYVTNQIMKFAP) the chain is on the cytoplasmic side. A helical transmembrane segment spans residues 199–219 (FGVFALIGVTVSKFGVESLIP). The Extracellular portion of the chain corresponds to 220-222 (LSK). The helical transmembrane segment at 223 to 243 (LVIVVYATMLFFIFAVLGGVA) threads the bilayer. Residue Lys244 is a topological domain, cytoplasmic. The chain crosses the membrane as a helical span at residues 245–265 (LFGINIFHIIKILKDELILAY). At 266–306 (STASSETVLPRIMDKMEKFGCPKAITSFVIPTGYSFNLDGS) the chain is on the extracellular side. The helical transmembrane segment at 307–327 (TLYQALAAIFIAQLYGIDMSV) threads the bilayer. The Cytoplasmic portion of the chain corresponds to 328 to 330 (SQQ). 2 helical membrane-spanning segments follow: residues 331-351 (ISLLLVLMVTSKGIAGVPGVS) and 352-372 (FVVLLATLGTVGIPVEGLAFI). The Cytoplasmic portion of the chain corresponds to 373–421 (AGIDRILDMARTAVNVIGNSLAAIIMSKWEGQYNEEKGKQYLAELQQSA).

Belongs to the dicarboxylate/amino acid:cation symporter (DAACS) (TC 2.A.23) family. Homotrimer.

It is found in the cell membrane. In terms of biological role, this carrier protein is part of the Na(+)-dependent, binding-protein-independent glutamate-aspartate transport system. The polypeptide is Proton/sodium-glutamate symport protein (gltT) (Bacillus caldotenax).